A 635-amino-acid polypeptide reads, in one-letter code: MADSRSLLDTINSPRDLKKLSIRQLETLANECRHELINLISLNGGHFASSLGVTELSVALHHVYNTEKDRIVWDVGHQAYIHKMLTGRRERMNSNRKYGGISGFPKIHESPHDAFGTGHASTSISAAAGIASARDLKGGNEKVIAVIGDGSMTGGMAFEAMNHLGDLKNDVLVILNDNQMAISPSTGGLKTHMVNFTLNKTYNKARRLLWESMSMMNNDLAERAKTSLRRLEDGMKAALTPGAFFEALGLRYFGPIDGHNMGQLVRALREMQELPHPKLLHVITTKGKGFLPAEENQSDWHAHNGGFDTVTGITAKKEGPSATPKYQEVFGEALVEMALKDPAITAITAAMPTGTSLDLFQKAMPDRFYDVGIAEGHAVTFAAGQALEGLKPVCAIYSTFLQRALDQVIHDVALQNLPVVFAIDRAGLVGEDGPTHHGAFDLSYLHAVPGLTIMAPSDGQELRDMLHTALYHIDGPVAIRYPRGSTGGEEMRKNFTALEPGKGRMLKEGTGPVILTLGTMAATALEAGRLLENEGISVEIADMRFLKPLDTALIDRLSASATHIVTLEENSIIGGFGSAVADHLSEASKKTRLLRIGLPDAFVTHGSMTDLYRETGLDAPAVAEKIRLFYTGRES.

Residues His77 and 118-120 each bind thiamine diphosphate; that span reads GHA. Residue Asp149 participates in Mg(2+) binding. Residues 150–151, Asn178, Phe290, and Glu375 contribute to the thiamine diphosphate site; that span reads GS. Asn178 serves as a coordination point for Mg(2+).

This sequence belongs to the transketolase family. DXPS subfamily. Homodimer. The cofactor is Mg(2+). Thiamine diphosphate is required as a cofactor.

It catalyses the reaction D-glyceraldehyde 3-phosphate + pyruvate + H(+) = 1-deoxy-D-xylulose 5-phosphate + CO2. Its pathway is metabolic intermediate biosynthesis; 1-deoxy-D-xylulose 5-phosphate biosynthesis; 1-deoxy-D-xylulose 5-phosphate from D-glyceraldehyde 3-phosphate and pyruvate: step 1/1. In terms of biological role, catalyzes the acyloin condensation reaction between C atoms 2 and 3 of pyruvate and glyceraldehyde 3-phosphate to yield 1-deoxy-D-xylulose-5-phosphate (DXP). The polypeptide is 1-deoxy-D-xylulose-5-phosphate synthase (Chlorobium phaeovibrioides (strain DSM 265 / 1930) (Prosthecochloris vibrioformis (strain DSM 265))).